A 438-amino-acid polypeptide reads, in one-letter code: Gamma-glutamyl phosphate reductase (438 aa).

Belongs to the gamma-glutamyl phosphate reductase family.

It localises to the cytoplasm. It carries out the reaction L-glutamate 5-semialdehyde + phosphate + NADP(+) = L-glutamyl 5-phosphate + NADPH + H(+). It functions in the pathway amino-acid biosynthesis; L-proline biosynthesis; L-glutamate 5-semialdehyde from L-glutamate: step 2/2. Its function is as follows. Catalyzes the NADPH-dependent reduction of L-glutamate 5-phosphate into L-glutamate 5-semialdehyde and phosphate. The product spontaneously undergoes cyclization to form 1-pyrroline-5-carboxylate. The polypeptide is Gamma-glutamyl phosphate reductase (Prochlorococcus marinus (strain NATL1A)).